A 606-amino-acid chain; its full sequence is Transcription factor glial cells missing 2 (606 aa).

Residues 20–37 show a composition bias toward polar residues; it reads DHSQLTQFVQPQSQSTHS. 3 disordered regions span residues 20 to 65, 475 to 501, and 561 to 606; these read DHSQ…KGKR, EMQQ…HHYY, and TAPT…SVTH. The span at 44 to 61 shows a compositional bias: low complexity; the sequence is PGQQQAGGSMTMPSSSTG. The GCM DNA-binding region spans 65–224; it reads REWDINDAIV…KNSSVSKRAF (160 aa). A compositionally biased stretch (polar residues) spans 490–501; that stretch reads FGGNQTAGHHYY. Residues 569–580 show a composition bias toward pro residues; it reads PGHPPPPPPPPT. Basic residues predominate over residues 583-593; the sequence is YHHHHHHHLHH. Over residues 594-606 the composition is skewed to low complexity; it reads PAAATGLAPSVTH.

In terms of tissue distribution, expressed in glial lineages within embryonic procephalic mesoderm. Expression is highest in hemocyte primordia and longitudinal and nerve root ganglia.

It is found in the nucleus. Its function is as follows. Transcription factor with a minor role promoting glial cell differentiation and a more significant role in hematocyte differentiation. Gcm2, together with gcm, is required for the proliferation of plasmatocyte precursors, the expression of Croquemort protein, and the ability of plasmatocytes to convert into macrophages. The chain is Transcription factor glial cells missing 2 (gcm2) from Drosophila melanogaster (Fruit fly).